We begin with the raw amino-acid sequence, 588 residues long: Vesicular glutamate transporter 3 (588 aa).

Topologically, residues 1 to 76 (MPFNAFDTFK…CSCCGIPKRY (76 aa)) are cytoplasmic. The chain crosses the membrane as a helical span at residues 77–97 (IIAVMSGLGFCISFGIRCNLG). The Vesicular portion of the chain corresponds to 98–130 (VAIVEMVNNSTVYVDGKPEIQTAQFNWDPETVG). N-linked (GlcNAc...) asparagine glycosylation is present at N106. Residues 131–151 (LIHGSFFWGYIVTQIPGGFIS) traverse the membrane as a helical segment. The Cytoplasmic portion of the chain corresponds to 152–153 (NK). Residues 154–174 (FAANRVFGAAIFLTSTLNMFI) traverse the membrane as a helical segment. Topologically, residues 175–182 (PSAARVHY) are vesicular. A helical transmembrane segment spans residues 183–203 (GCVMCVRILQGLVEGVTYPAC). Residues 204–221 (HGMWSKWAPPLERSRLAT) lie on the Cytoplasmic side of the membrane. Residues 222-242 (TSFCGSYAGAVVAMPLAGVLV) form a helical membrane-spanning segment. Residues 243–249 (QYIGWAS) lie on the Vesicular side of the membrane. Residues 250-270 (VFYIYGMFGIIWYMFWLLQAY) traverse the membrane as a helical segment. At 271–314 (ECPAVHPTISNEERTYIETSIGEGANLASLSKFNTPWRRFFTSL) the chain is on the cytoplasmic side. A helical transmembrane segment spans residues 315 to 335 (PVYAIIVANFCRSWTFYLLLI). The Vesicular segment spans residues 336-353 (SQPAYFEEVFGFAISKVG). A helical transmembrane segment spans residues 354 to 374 (LLSAVPHMVMTIVVPIGGQLA). The Cytoplasmic segment spans residues 375–390 (DYLRSRKILTTTAVRK). Residues 391 to 411 (IMNCGGFGMEATLLLVVGFSH) traverse the membrane as a helical segment. Residues 412 to 413 (TK) are Vesicular-facing. A helical transmembrane segment spans residues 414 to 434 (GVAISFLVLAVGFSGFAISGF). Residues 435 to 447 (NVNHLDIAPRYAS) lie on the Cytoplasmic side of the membrane. The helical transmembrane segment at 448–468 (ILMGISNGVGTLSGMVCPLIV) threads the bilayer. Topologically, residues 469–481 (GAMTKHKTREEWQ) are vesicular. A helical membrane pass occupies residues 482 to 502 (NVFLIAALVHYSGVIFYGVFA). The Cytoplasmic portion of the chain corresponds to 503-585 (SGEKQDWADP…LSYQNEEDFS (83 aa)). The disordered stretch occupies residues 539-588 (FVSPRKKMSYGATTQNCEVQKTDRRQQRESAFEGEEPLSYQNEEDFSETS). The span at 558–569 (QKTDRRQQRESA) shows a compositional bias: basic and acidic residues. Acidic residues predominate over residues 570–588 (FEGEEPLSYQNEEDFSETS).

This sequence belongs to the major facilitator superfamily. Sodium/anion cotransporter family. VGLUT subfamily. Expressed in brain, kidney and liver. Expressed within the amygdala, brainstem, cerberal cortex, dorsal root ganglia, dorsal spinal cord, hippocampus, hypothalamus, retina, striatum and ventral spinal cord. Expressed within neurons of the caudate-putamen, olfactory tubercle, nucleus accumbens, hippocampus, interpeduncular nucleus and dorsal and medial raphe nuclei. Expressed in inner hair cells of the ear. Expressed at synaptic terminals within the lateral superior olive (LSO), a nucleus of the mammalian sound localization system, and in the medial nucleus of the trapezoid body (MNTB), which provides inhibitory input to the LSO.

The protein resides in the cytoplasmic vesicle. It localises to the secretory vesicle. Its subcellular location is the synaptic vesicle membrane. It is found in the cell membrane. The protein localises to the synapse. The protein resides in the synaptosome. It catalyses the reaction L-glutamate(out) = L-glutamate(in). The enzyme catalyses chloride(in) = chloride(out). It carries out the reaction 3 Na(+)(out) + phosphate(out) = 3 Na(+)(in) + phosphate(in). With respect to regulation, the L-glutamate uniporter activity exhibits a biphasic dependence on chloride concentration. Chloride channel activity is allosterically activated by lumenal H(+) and Cl(-) leading to synaptic vesicles acidification. The glutamate transport activity is allosterically activated by lumenal H(+) and Cl(-), preventing non-vesicular L-glutamate release. In terms of biological role, multifunctional transporter that transports L-glutamate as well as multiple ions such as chloride, sodium and phosphate. At the synaptic vesicle membrane, mainly functions as an uniporter that mediates the uptake of L-glutamate into synaptic vesicles at presynaptic nerve terminals of excitatory neural cells. The L-glutamate uniporter activity is electrogenic and is driven by the proton electrochemical gradient, mainly by the electrical gradient established by the vacuolar H(+)-ATPase across the synaptic vesicle membrane. In addition, functions as a chloride channel that allows a chloride permeation through the synaptic vesicle membrane that affects the proton electrochemical gradient and promotes synaptic vesicles acidification. At the plasma membrane, following exocytosis, functions as a symporter of Na(+) and phosphate from the extracellular space to the cytoplasm allowing synaptic phosphate homeostasis regulation. The symporter activity is electrogenic. Moreover, operates synergistically with SLC18A3/VACHT under a constant H(+) gradient, thereby allowing striatal vesicular acetylcholine uptake. The protein is Vesicular glutamate transporter 3 of Rattus norvegicus (Rat).